A 459-amino-acid polypeptide reads, in one-letter code: DnaJ protein homolog XDJ1 (459 aa).

The J domain occupies 7 to 79 (GDRLYDVLGV…KSHYDLYGDD (73 aa)). The CR-type zinc finger occupies 146–240 (GKKLKFDLKR…CAGLGLLSKK (95 aa)). CXXCXGXG motif repeat units lie at residues 159–166 (CIKCHGSG), 181–188 (CESCAGKG), 208–215 (CEKCNGKG), and 228–235 (CPDCAGLG).

The protein resides in the mitochondrion outer membrane. The sequence is that of DnaJ protein homolog XDJ1 (XDJ1) from Saccharomyces cerevisiae (strain ATCC 204508 / S288c) (Baker's yeast).